The following is a 365-amino-acid chain: Deoxyribonuclease-2-alpha (365 aa).

Positions 1–19 (MATLSSLLLTALLWVPVGT) are cleaved as a signal peptide. Residues Cys-22 and Cys-162 are joined by a disulfide bond. N-linked (GlcNAc...) asparagine glycans are attached at residues Asn-215, Asn-269, and Asn-293. 2 disulfides stabilise this stretch: Cys-270–Cys-348 and Cys-311–Cys-330. His-298 is an active-site residue.

This sequence belongs to the DNase II family.

It is found in the lysosome. The catalysed reaction is Endonucleolytic cleavage to nucleoside 3'-phosphates and 3'-phosphooligonucleotide end-products.. In terms of biological role, hydrolyzes DNA under acidic conditions with a preference for double-stranded DNA. Plays a major role in the clearance of nucleic acids generated through apoptosis, hence preventing autoinflammation. Necessary for proper fetal development and for definitive erythropoiesis in fetal liver and bone marrow, where it degrades nuclear DNA expelled from erythroid precursor cells. The sequence is that of Deoxyribonuclease-2-alpha (DNASE2) from Bos taurus (Bovine).